The chain runs to 603 residues: UvrABC system protein C (603 aa).

Positions 15-92 (DQPGCYLMKD…IKKHDPRFNI (78 aa)) constitute a GIY-YIG domain. Residues 197-232 (KTVKNDLMKKMQEAAENMEFEKAGEFRDQINAIETT) form the UVR domain.

Belongs to the UvrC family. In terms of assembly, interacts with UvrB in an incision complex.

It localises to the cytoplasm. Its function is as follows. The UvrABC repair system catalyzes the recognition and processing of DNA lesions. UvrC both incises the 5' and 3' sides of the lesion. The N-terminal half is responsible for the 3' incision and the C-terminal half is responsible for the 5' incision. The chain is UvrABC system protein C from Listeria innocua serovar 6a (strain ATCC BAA-680 / CLIP 11262).